A 272-amino-acid chain; its full sequence is Pyrroline-5-carboxylate reductase (272 aa).

Belongs to the pyrroline-5-carboxylate reductase family.

The protein resides in the cytoplasm. The catalysed reaction is L-proline + NADP(+) = (S)-1-pyrroline-5-carboxylate + NADPH + 2 H(+). It catalyses the reaction L-proline + NAD(+) = (S)-1-pyrroline-5-carboxylate + NADH + 2 H(+). Its pathway is amino-acid biosynthesis; L-proline biosynthesis; L-proline from L-glutamate 5-semialdehyde: step 1/1. In terms of biological role, catalyzes the reduction of 1-pyrroline-5-carboxylate (PCA) to L-proline. The sequence is that of Pyrroline-5-carboxylate reductase from Vibrio alginolyticus.